Consider the following 394-residue polypeptide: Tubulin-like protein CetZ5 (394 aa).

GTP contacts are provided by residues Q10–N14, G110–G112, E142, N169, and N187.

Belongs to the CetZ family.

It localises to the cytoplasm. In terms of biological role, involved in cell shape control. In Haloferax volcanii (strain ATCC 29605 / DSM 3757 / JCM 8879 / NBRC 14742 / NCIMB 2012 / VKM B-1768 / DS2) (Halobacterium volcanii), this protein is Tubulin-like protein CetZ5.